Consider the following 462-residue polypeptide: C4-dicarboxylate transport transcriptional regulatory protein DctD (462 aa).

The Response regulatory domain maps to 12–126; it reads QVLLIDDDPH…ALLDSVRRAL (115 aa). 4-aspartylphosphate is present on Asp-61. The region spanning 152–381 is the Sigma-54 factor interaction domain; the sequence is LIGRSAGMQR…LQNAAERFAL (230 aa). ATP-binding positions include 180–187 and 243–252; these read GETGAGKE and ANGGTLFLDE.

Phosphorylated by DctB.

In terms of biological role, member of the two-component regulatory system DctB/DctD, which regulates C4-dicarboxylate transport via regulation of expression of the dctPQM operon and dctA. In Pseudomonas aeruginosa (strain ATCC 15692 / DSM 22644 / CIP 104116 / JCM 14847 / LMG 12228 / 1C / PRS 101 / PAO1), this protein is C4-dicarboxylate transport transcriptional regulatory protein DctD.